A 101-amino-acid chain; its full sequence is Pro-corazonin (101 aa).

The first 16 residues, 1-16 (MLVLFVLSLVVSCALC), serve as a signal peptide directing secretion. Asparagine 27 is subject to Asparagine amide. The propeptide occupies 31-101 (SNFPAEISAL…REKAPNNDNY (71 aa)).

This sequence belongs to the corazonin family. As to expression, expressed in central brain and the retrocerebral complex but not in antennal lobes, optic lobes or in gnathal, thoracic and abdominal ganglia (at protein level).

It is found in the secreted. In terms of biological role, cardioactive peptide. Corazonin is probably involved in the physiological regulation of the heart beat. This Camponotus floridanus (Florida carpenter ant) protein is Pro-corazonin.